Reading from the N-terminus, the 279-residue chain is Undecaprenyl-diphosphatase (279 aa).

Helical transmembrane passes span 2–22, 44–64, 85–105, 113–133, 163–183, 188–208, 225–245, and 255–275; these read LFIE…TEWL, AFME…VIVI, WQLW…AVPL, FNHM…FLWI, VLSI…AIIL, TVAA…YSGL, LLVL…VIKL, and FTVF…YSVF.

This sequence belongs to the UppP family.

It is found in the cell membrane. It catalyses the reaction di-trans,octa-cis-undecaprenyl diphosphate + H2O = di-trans,octa-cis-undecaprenyl phosphate + phosphate + H(+). Catalyzes the dephosphorylation of undecaprenyl diphosphate (UPP). Confers resistance to bacitracin. This is Undecaprenyl-diphosphatase from Streptococcus equi subsp. zooepidemicus (strain MGCS10565).